The following is a 528-amino-acid chain: Glutamyl-tRNA(Gln) amidotransferase subunit B, mitochondrial (528 aa).

The protein belongs to the GatB/GatE family. GatB subfamily. Subunit of the heterotrimeric GatFAB amidotransferase (AdT) complex, composed of A, B and F subunits.

Its subcellular location is the mitochondrion. It catalyses the reaction L-glutamyl-tRNA(Gln) + L-glutamine + ATP + H2O = L-glutaminyl-tRNA(Gln) + L-glutamate + ADP + phosphate + H(+). Its function is as follows. Allows the formation of correctly charged Gln-tRNA(Gln) through the transamidation of misacylated Glu-tRNA(Gln) in the mitochondria. The reaction takes place in the presence of glutamine and ATP through an activated gamma-phospho-Glu-tRNA(Gln). The chain is Glutamyl-tRNA(Gln) amidotransferase subunit B, mitochondrial from Clavispora lusitaniae (strain ATCC 42720) (Yeast).